The chain runs to 469 residues: ATP synthase subunit beta (469 aa).

153 to 160 serves as a coordination point for ATP; the sequence is GGAGVGKT.

This sequence belongs to the ATPase alpha/beta chains family. In terms of assembly, F-type ATPases have 2 components, CF(1) - the catalytic core - and CF(0) - the membrane proton channel. CF(1) has five subunits: alpha(3), beta(3), gamma(1), delta(1), epsilon(1). CF(0) has three main subunits: a(1), b(2) and c(9-12). The alpha and beta chains form an alternating ring which encloses part of the gamma chain. CF(1) is attached to CF(0) by a central stalk formed by the gamma and epsilon chains, while a peripheral stalk is formed by the delta and b chains.

Its subcellular location is the cell inner membrane. It carries out the reaction ATP + H2O + 4 H(+)(in) = ADP + phosphate + 5 H(+)(out). Produces ATP from ADP in the presence of a proton gradient across the membrane. The catalytic sites are hosted primarily by the beta subunits. The chain is ATP synthase subunit beta from Pseudothermotoga lettingae (strain ATCC BAA-301 / DSM 14385 / NBRC 107922 / TMO) (Thermotoga lettingae).